We begin with the raw amino-acid sequence, 113 residues long: uncharacterized protein (113 aa).

Belongs to the ycf68 family.

The protein resides in the plastid. It is found in the chloroplast. This is an uncharacterized protein from Eucalyptus globulus subsp. globulus (Tasmanian blue gum).